The sequence spans 570 residues: MIPPEIRRSVLLQKAIKLALAGTLLTFASFSATAADPSSDTETPQPPDILLGPLFNDVQNAKLFPDQKTFADAIPNSDPLMILADYRMQRNQSGFDLRHFVDVNFTLPKAGEKYVPPAGQSLREHIDGLWPVLTRSTKNVEKWDSLLPLPESYVVPGGRFREIYYWDSYFTMLGLAESGHWDKVADMVANFGYEIDAWGHIPNGNRTYYLSRSQPPFFAFMVELLAQHEGDDALKEYLPQLQKEYAYWMEGVETLQPGQQNQRVVKLEDGSVLNRYWDDRDTPRPESWVEDIATAKSNPNRPATEIYRDLRSAAASGWDFSSRWMDNPQQLSTIRTTTIVPVDLNALLYQLEKTLARASAAAGDRAKASQYDALANARQKAIEMHLWNNKEGWYADYDLQNNKIRNQLTAAALFPLYVNAAAKDRAAKVAAAAQAHLLQPGGLATTSVKSGQQWDAPNGWAPLQWVAAEGLQNYGQDDVAMEVTWRFLTNVQHTYDREKKLVEKYDVSSTGTGGGGGEYPLQDGFGWTNGVTLKMLDLICPQEKPCDSVPSTRPASLSATPTKTPSAATQ.

An N-terminal signal peptide occupies residues Met-1 to Ala-34. Residues Arg-159, Trp-166–Asp-167, Asn-203, Arg-212–Gln-214, Arg-284–Glu-286, and Gly-317 each bind substrate. Residues Asp-319 and Glu-503 each act as proton donor/acceptor in the active site. Glu-518 is a binding site for substrate. A disordered region spans residues Pro-545–Gln-570. Over residues Pro-554–Gln-570 the composition is skewed to low complexity.

It belongs to the glycosyl hydrolase 37 family. As to quaternary structure, monomer.

It localises to the periplasm. It carries out the reaction alpha,alpha-trehalose + H2O = alpha-D-glucose + beta-D-glucose. Provides the cells with the ability to utilize trehalose at high osmolarity by splitting it into glucose molecules that can subsequently be taken up by the phosphotransferase-mediated uptake system. The polypeptide is Periplasmic trehalase (Salmonella agona (strain SL483)).